Consider the following 3926-residue polypeptide: Protein bassoon (3926 aa).

Residues 1–161 (MGNEVSLEGG…PTSPYSVPQI (161 aa)) form a disordered region. Gly-2 carries the N-myristoyl glycine lipid modification. Pro residues-rich tracts occupy residues 15 to 30 (PLPPGGAGPGPGPGPG) and 58 to 72 (PPVPGPGPGPGPGPG). Residues 23-32 (PGPGPGPGPG) are 5 X 2 AA tandem repeats of P-G. Positions 61–74 (PGPGPGPGPGPGPG) are 7 X 2 AA tandem repeats of P-G. 2 stretches are compositionally biased toward polar residues: residues 90 to 105 (RAASPTPKQASATTPG) and 130 to 157 (QVDSRTQRSGRSPSVSPDRGSTPTSPYS). A Phosphoserine modification is found at Ser-145. Residue Arg-148 is modified to Omega-N-methylarginine. 2 C4-type zinc fingers span residues 170–193 (CPICKTSDLTSTPSQPNFNTCTQC) and 198–220 (CNQCGFNPNPHLTQVKEWLCLNC). 2 disordered regions span residues 231 to 343 (TTAP…EQTQ) and 366 to 459 (SVQP…KTMP). Residues 233 to 243 (APRSKSQQQLH) are compositionally biased toward polar residues. Phosphoserine occurs at positions 244 and 248. Over residues 366-377 (SVQPEADTQGQP) the composition is skewed to polar residues. C4-type zinc fingers lie at residues 465-488 (CPLCQAELNVGSKSPANYNTCTTC) and 493-515 (CNLCGFNPTPHLVEKTEWLCLNC). Disordered regions lie at residues 524–927 (SLGE…LQGG) and 940–1248 (GSYG…AEGT). Low complexity predominate over residues 552–569 (PLKQKGPQGLGQPSGPLP). 3 consecutive repeat copies span residues 571–577 (KASPLST), 578–584 (KASPLPS), and 585–591 (KASPQAK). The interval 571–591 (KASPLSTKASPLPSKASPQAK) is 3 X 7 AA tandem repeats of K-A-S-P-[LQ]-[APS]-[KST]. The segment covering 619 to 631 (MPKPPPETTPTPA) has biased composition (pro residues). Polar residues predominate over residues 671 to 680 (QDASRSPQSL). The span at 681-698 (SDTGYSSDGISSSQSEIT) shows a compositional bias: low complexity. The segment covering 771-787 (FDSDEELEDILEEDEDS) has biased composition (acidic residues). Residues 788 to 797 (AEWRRRREQQ) show a composition bias toward basic and acidic residues. The span at 851-862 (SAEEDNLEEDDT) shows a compositional bias: acidic residues. Arg-867 is subject to Omega-N-methylarginine. Position 970 is a phosphoserine (Ser-970). Residues 984–1001 (PASTPSYTSGTSPTSLSS) show a composition bias toward low complexity. Residues 1037-1092 (IEDSSEEEELREEEELLREQEKMREVEQQRIRSTARKTRRDKEELRAQRRRERSKT) adopt a coiled-coil conformation. Residues 1039-1052 (DSSEEEELREEEEL) are compositionally biased toward acidic residues. Phosphoserine is present on residues Ser-1040 and Ser-1041. Positions 1053–1066 (LREQEKMREVEQQR) are enriched in basic and acidic residues. Ser-1090 bears the Phosphoserine mark. The residue at position 1092 (Thr-1092) is a Phosphothreonine. 2 positions are modified to phosphoserine: Ser-1098 and Ser-1104. Residues 1107 to 1122 (EELRQAAEMEELHRSS) show a composition bias toward basic and acidic residues. Low complexity-rich tracts occupy residues 1123–1133 (CSEYSPSPSLD) and 1163–1180 (SPTETPSGSSTTPSSGRP). The stretch at 1181 to 1208 (LKSAEEAYEEMMRKAELLQRQQGQAAGA) forms a coiled coil. A compositionally biased stretch (basic and acidic residues) spans 1182–1197 (KSAEEAYEEMMRKAEL). Positions 1199-1209 (QRQQGQAAGAR) are enriched in low complexity. Ser-1226 is subject to Phosphoserine. The stretch at 1276–1294 (RDLAFAEDKKKEKQFLNAE) forms a coiled coil. Disordered regions lie at residues 1298 to 1547 (MDPM…RLVW) and 1570 to 1620 (RMVH…RVPS). Residues 1322-1332 (SFSTPTSSDSS) are compositionally biased toward low complexity. A glycan (O-linked (GlcNAc) threonine) is linked at Thr-1343. A compositionally biased stretch (basic and acidic residues) spans 1346–1355 (FAKETQDPLK). Composition is skewed to low complexity over residues 1358–1367 (SSPASPSSAS) and 1377–1392 (GPGTPATTAVAPCPAG). An O-linked (GlcNAc) threonine glycan is attached at Thr-1384. Residues 1408–1434 (RSPSPSSTAHSYGHSPTTANYGSQTED) are compositionally biased toward polar residues. Over residues 1466-1493 (PSRAYSYFASSSPPLSPSSPSESPTFSP) the composition is skewed to low complexity. Residues Ser-1477, Ser-1486, and Ser-1488 each carry the phosphoserine modification. The segment covering 1570 to 1598 (RMVHASASTSPLCSPTETQPTTHGYSQTT) has biased composition (polar residues). The span at 1606–1616 (PPEPPGPPGFP) shows a compositional bias: pro residues. An omega-N-methylarginine mark is found at Arg-1787 and Arg-1791. An Asymmetric dimethylarginine; alternate modification is found at Arg-1801. At Arg-1801 the chain carries Omega-N-methylarginine; alternate. Position 1813 is an omega-N-methylarginine (Arg-1813). The disordered stretch occupies residues 1924 to 1978 (PEKSMADAAPPGQSSSPFYGPRDPEPPEPPTYRAQGVVGPGPHEEQRPYPQGLPG). Phosphoserine is present on residues Ser-1985 and Ser-2041. 2 positions are modified to omega-N-methylarginine: Arg-2046 and Arg-2076. An asymmetric dimethylarginine mark is found at Arg-2250, Arg-2260, and Arg-2266. Residues 2287–2309 (AAKAPGAGGPSRPEMPVGAAREE) form a disordered region. A glycan (O-linked (GlcNAc) threonine) is linked at Thr-2314. A compositionally biased stretch (low complexity) spans 2324–2341 (GAPAPAPLAGQKPPADAA). 2 disordered regions span residues 2324–2370 (GAPA…KQQE) and 2532–2568 (PSSASDMSLQTEEQWEASRSGIKKRHSMPRLRDACEL). Positions 2351–2476 (RPGFEKEEAS…EEQKQRQKAP (126 aa)) form a coiled coil. Residues 2353–2370 (GFEKEEASQEERQRKQQE) are compositionally biased toward basic and acidic residues. A compositionally biased stretch (polar residues) spans 2533 to 2543 (SSASDMSLQTE). Phosphoserine is present on Ser-2570. Phosphothreonine occurs at positions 2587 and 2614. Residues 2601–2655 (RRRARRSADCSVQTDDEDSAEWEQPVRRRRSRLPRHSDSGSDSKHDATASSSSAA) are disordered. The segment covering 2635–2647 (RHSDSGSDSKHDA) has biased composition (basic and acidic residues). Thr-2691 carries O-linked (GlcNAc) threonine glycosylation. The tract at residues 2721 to 3268 (EPDGQAQGVA…PGSSGRPGKE (548 aa)) is interaction with DAO. A phosphoserine mark is found at Ser-2802, Ser-2851, and Ser-2857. The segment at 2845 to 2865 (TLQRSLSDPKPLSPTAEESAK) is disordered. O-linked (GlcNAc) threonine glycosylation is present at Thr-2936. Positions 2939–2981 (SLLRELDRDLRLVEHESTKLRKKQAELDEEEKEIDAKLKYLEL) form a coiled coil. Phosphoserine is present on Ser-3013. Low complexity predominate over residues 3039–3055 (AAAPATPSGPTAFQQPR). Disordered regions lie at residues 3039–3375 (AAAP…FSPI), 3424–3551 (GMSS…PRAH), and 3572–3897 (EAYH…SVFS). Over residues 3083–3095 (YPGPSTYPAPAFP) the composition is skewed to pro residues. The segment covering 3165–3176 (ASPVVPMSSAPS) has biased composition (low complexity). A compositionally biased stretch (polar residues) spans 3205–3228 (SVSQSPAPTYPSDSHYTSLEQNVP). Position 3291 is a phosphoserine (Ser-3291). Basic and acidic residues-rich tracts occupy residues 3321–3333 (GDSDYRHGARVEK), 3363–3375 (QGMEQKISKFSPI), and 3465–3477 (GYEREREAVERLQ). Ser-3373 bears the Phosphoserine mark. Arg-3492 carries the post-translational modification Omega-N-methylarginine. 4 stretches are compositionally biased toward basic and acidic residues: residues 3540–3551 (VQEHVKDGPRAH), 3583–3593 (WFDKPRDARSD), 3628–3647 (LWPHDEGGPGRHASAKEHRH), and 3657–3681 (HTGEEPGRRAAKPHARDLGRHEARP). The span at 3703 to 3712 (AEYSQPSRAS) shows a compositional bias: polar residues. Positions 3741-3807 (PQAQPQLQGR…RLQQQSQPTT (67 aa)) are enriched in low complexity. Residue Arg-3808 is modified to Omega-N-methylarginine. 2 stretches are compositionally biased toward low complexity: residues 3849-3860 (AKAPQQGRAPQA) and 3882-3892 (GAPAGQPGADG).

Interacts with PCLO, ERC2/CAST1, RIMS1 and UNC13A. Interacts with TPRG1L. Interacts with DYNLL1 and DYNLL2; these interactions potentially link PTVs to dynein and myosin V motor complexes. Interacts with ATG5; this interaction is important for the regulation of presynaptic autophagy. Interacts (via C-terminus) with TRIO (via N-terminus). Interacts with CTBP1. Interacts with SIAH1; this interaction negatively regulates SIAH1 E3 ligase activity. Interacts (via coiled region) with DAO; the interaction is direct. Myristoylated. The N-terminal myristoylation is not sufficient for presynaptic localization. In terms of tissue distribution, exclusively expressed in brain.

Its subcellular location is the cytoplasm. The protein resides in the presynaptic active zone. The protein localises to the cytoskeleton. It is found in the cytoplasmic vesicle. It localises to the secretory vesicle. Its subcellular location is the synaptic vesicle membrane. In terms of biological role, scaffold protein of the presynaptic cytomatrix at the active zone (CAZ) which is the place in the synapse where neurotransmitter is released. After synthesis, participates in the formation of Golgi-derived membranous organelles termed Piccolo-Bassoon transport vesicles (PTVs) that are transported along axons to sites of nascent synaptic contacts. At the presynaptic active zone, regulates the spatial organization of synaptic vesicle cluster, the protein complexes that execute membrane fusion and compensatory endocytosis. Also functions in processes other than assembly such as the regulation of specific presynaptic protein ubiquitination by interacting with SIAH1 or the regulation of presynaptic autophagy by associating with ATG5. Also mediates synapse to nucleus communication leading to reconfiguration of gene expression by associating with the transcriptional corepressor CTBP1 and by subsequently reducing the size of its pool available for nuclear import. Inhibits the activity of the proportion of DAO enzyme that localizes to the presynaptic active zone, which may modulate synaptic transmission. This Homo sapiens (Human) protein is Protein bassoon.